Here is a 305-residue protein sequence, read N- to C-terminus: UDP-3-O-acyl-N-acetylglucosamine deacetylase (305 aa).

The Zn(2+) site is built by His-79, His-238, and Asp-242. His-265 (proton donor) is an active-site residue.

It belongs to the LpxC family. The cofactor is Zn(2+).

It carries out the reaction a UDP-3-O-[(3R)-3-hydroxyacyl]-N-acetyl-alpha-D-glucosamine + H2O = a UDP-3-O-[(3R)-3-hydroxyacyl]-alpha-D-glucosamine + acetate. The protein operates within glycolipid biosynthesis; lipid IV(A) biosynthesis; lipid IV(A) from (3R)-3-hydroxytetradecanoyl-[acyl-carrier-protein] and UDP-N-acetyl-alpha-D-glucosamine: step 2/6. Its function is as follows. Catalyzes the hydrolysis of UDP-3-O-myristoyl-N-acetylglucosamine to form UDP-3-O-myristoylglucosamine and acetate, the committed step in lipid A biosynthesis. The sequence is that of UDP-3-O-acyl-N-acetylglucosamine deacetylase from Escherichia fergusonii (strain ATCC 35469 / DSM 13698 / CCUG 18766 / IAM 14443 / JCM 21226 / LMG 7866 / NBRC 102419 / NCTC 12128 / CDC 0568-73).